Consider the following 308-residue polypeptide: Lipoyl synthase (308 aa).

[4Fe-4S] cluster is bound by residues Cys-51, Cys-56, Cys-62, Cys-77, Cys-81, Cys-84, and Ser-290. The region spanning 63 to 279 (WSKRHATFMI…ETIAKSKGFL (217 aa)) is the Radical SAM core domain.

The protein belongs to the radical SAM superfamily. Lipoyl synthase family. [4Fe-4S] cluster serves as cofactor.

Its subcellular location is the cytoplasm. The catalysed reaction is [[Fe-S] cluster scaffold protein carrying a second [4Fe-4S](2+) cluster] + N(6)-octanoyl-L-lysyl-[protein] + 2 oxidized [2Fe-2S]-[ferredoxin] + 2 S-adenosyl-L-methionine + 4 H(+) = [[Fe-S] cluster scaffold protein] + N(6)-[(R)-dihydrolipoyl]-L-lysyl-[protein] + 4 Fe(3+) + 2 hydrogen sulfide + 2 5'-deoxyadenosine + 2 L-methionine + 2 reduced [2Fe-2S]-[ferredoxin]. It participates in protein modification; protein lipoylation via endogenous pathway; protein N(6)-(lipoyl)lysine from octanoyl-[acyl-carrier-protein]: step 2/2. Functionally, catalyzes the radical-mediated insertion of two sulfur atoms into the C-6 and C-8 positions of the octanoyl moiety bound to the lipoyl domains of lipoate-dependent enzymes, thereby converting the octanoylated domains into lipoylated derivatives. This is Lipoyl synthase from Pelagibacter ubique (strain HTCC1062).